The following is a 347-amino-acid chain: DNA-directed RNA polymerase subunit alpha (347 aa).

Positions M1–D243 are alpha N-terminal domain (alpha-NTD). The segment at S255–A347 is alpha C-terminal domain (alpha-CTD).

It belongs to the RNA polymerase alpha chain family. In terms of assembly, homodimer. The RNAP catalytic core consists of 2 alpha, 1 beta, 1 beta' and 1 omega subunit. When a sigma factor is associated with the core the holoenzyme is formed, which can initiate transcription.

It carries out the reaction RNA(n) + a ribonucleoside 5'-triphosphate = RNA(n+1) + diphosphate. Its function is as follows. DNA-dependent RNA polymerase catalyzes the transcription of DNA into RNA using the four ribonucleoside triphosphates as substrates. The protein is DNA-directed RNA polymerase subunit alpha of Lawsonia intracellularis (strain PHE/MN1-00).